The primary structure comprises 273 residues: MANCFVGDIQGCYDDLRRLLDLAKFDPAKDVLWLCGDLVARGPDSLKTLRYVKSLGQRAVTVLGNHDLHLLAVADGVAPLKKKDKLQALMEAPDRDELLTWLRHRPLLAEHPDLPIMMVHAGISPAWDARTARNCAREVESLLRGDQYSWLLHNMYGDLPDGWSEDLAGIERYRYIINTFTRMRFCYFDGRLEFKCKKGPTESTPGLRPWFEQREHHMDDPILVFGHWAALMGNTGRNDIKALDTGCVWGNSLTLWRYEDDALIATPCPTHAK.

It belongs to the Ap4A hydrolase family.

It carries out the reaction P(1),P(4)-bis(5'-adenosyl) tetraphosphate + H2O = 2 ADP + 2 H(+). Hydrolyzes diadenosine 5',5'''-P1,P4-tetraphosphate to yield ADP. In Aeromonas salmonicida (strain A449), this protein is Bis(5'-nucleosyl)-tetraphosphatase, symmetrical.